A 298-amino-acid polypeptide reads, in one-letter code: Glycine--tRNA ligase alpha subunit (298 aa).

This sequence belongs to the class-II aminoacyl-tRNA synthetase family. As to quaternary structure, tetramer of two alpha and two beta subunits.

It is found in the cytoplasm. It carries out the reaction tRNA(Gly) + glycine + ATP = glycyl-tRNA(Gly) + AMP + diphosphate. The chain is Glycine--tRNA ligase alpha subunit from Helicobacter pylori (strain G27).